The following is a 264-amino-acid chain: Regulatory protein RecX (264 aa).

This sequence belongs to the RecX family.

The protein resides in the cytoplasm. In terms of biological role, modulates RecA activity. This is Regulatory protein RecX from Lacticaseibacillus casei (strain BL23) (Lactobacillus casei).